The chain runs to 433 residues: Glutamate--tRNA ligase 1 (433 aa).

The 'HIGH' region motif lies at 7–17; sequence PSPTGLIHLGN. The 'KMSKS' region motif lies at 230–234; sequence KMSKR. Residue K233 coordinates ATP.

The protein belongs to the class-I aminoacyl-tRNA synthetase family. Glutamate--tRNA ligase type 1 subfamily. As to quaternary structure, monomer.

It is found in the cytoplasm. The catalysed reaction is tRNA(Glu) + L-glutamate + ATP = L-glutamyl-tRNA(Glu) + AMP + diphosphate. Catalyzes the attachment of glutamate to tRNA(Glu) in a two-step reaction: glutamate is first activated by ATP to form Glu-AMP and then transferred to the acceptor end of tRNA(Glu). The protein is Glutamate--tRNA ligase 1 of Neorickettsia sennetsu (strain ATCC VR-367 / Miyayama) (Ehrlichia sennetsu).